Reading from the N-terminus, the 314-residue chain is Porphobilinogen deaminase (314 aa).

Cysteine 249 is subject to S-(dipyrrolylmethanemethyl)cysteine.

It belongs to the HMBS family. As to quaternary structure, monomer. Dipyrromethane is required as a cofactor.

The catalysed reaction is 4 porphobilinogen + H2O = hydroxymethylbilane + 4 NH4(+). Its pathway is porphyrin-containing compound metabolism; protoporphyrin-IX biosynthesis; coproporphyrinogen-III from 5-aminolevulinate: step 2/4. Its function is as follows. Tetrapolymerization of the monopyrrole PBG into the hydroxymethylbilane pre-uroporphyrinogen in several discrete steps. This Brucella abortus (strain S19) protein is Porphobilinogen deaminase.